The primary structure comprises 356 residues: Zinc finger CCCH domain-containing protein 49 (356 aa).

2 C3H1-type zinc fingers span residues 120–146 (YSGT…HGVF) and 155–177 (YRTQ…AHSP). The interval 209-235 (ISPVSGSPPMSPRADSESSPMTQSLSR) is disordered. Positions 225 to 235 (ESSPMTQSLSR) are enriched in polar residues.

The polypeptide is Zinc finger CCCH domain-containing protein 49 (Arabidopsis thaliana (Mouse-ear cress)).